The following is a 227-amino-acid chain: NAD(P)H-quinone oxidoreductase subunit K, chloroplastic (227 aa).

4 residues coordinate [4Fe-4S] cluster: Cys-43, Cys-44, Cys-108, and Cys-139.

Belongs to the complex I 20 kDa subunit family. In terms of assembly, NDH is composed of at least 16 different subunits, 5 of which are encoded in the nucleus. [4Fe-4S] cluster serves as cofactor.

It is found in the plastid. The protein localises to the chloroplast thylakoid membrane. It carries out the reaction a plastoquinone + NADH + (n+1) H(+)(in) = a plastoquinol + NAD(+) + n H(+)(out). The enzyme catalyses a plastoquinone + NADPH + (n+1) H(+)(in) = a plastoquinol + NADP(+) + n H(+)(out). Its function is as follows. NDH shuttles electrons from NAD(P)H:plastoquinone, via FMN and iron-sulfur (Fe-S) centers, to quinones in the photosynthetic chain and possibly in a chloroplast respiratory chain. The immediate electron acceptor for the enzyme in this species is believed to be plastoquinone. Couples the redox reaction to proton translocation, and thus conserves the redox energy in a proton gradient. The protein is NAD(P)H-quinone oxidoreductase subunit K, chloroplastic of Citrus sinensis (Sweet orange).